The sequence spans 252 residues: Protein lin-28 homolog B (252 aa).

The disordered stretch occupies residues 1–30; sequence MAEGGAARGTREEQGKLPEQEEEEEEDPQV. The segment covering 9–19 has biased composition (basic and acidic residues); sequence GTREEQGKLPE. The 74-residue stretch at 32–105 folds into the CSD domain; it reads LGSGHCKWFN…GFESLRVTGP (74 aa). 2 CCHC-type zinc fingers span residues 130–147 and 152–169; these read DRCY…ECNL and KKCH…NCPH. Positions 132, 135, 140, 145, 154, 157, 162, and 167 each coordinate Zn(2+). The tract at residues 172–252 is disordered; that stretch reads VPQHPTTSQG…KGPSVQKKKK (81 aa). Over residues 213-222 the composition is skewed to basic and acidic residues; the sequence is GRSELSERSS. Residues 225 to 238 are compositionally biased toward polar residues; it reads PQEASLSKISTSPE.

It belongs to the lin-28 family.

It localises to the nucleus. The protein localises to the nucleolus. In terms of biological role, suppressor of specific microRNA (miRNA) biogenesis. Binds target primary miRNA transcripts and sequester them in the nucleolus, away from the microprocessor complex, hence preventing their processing into mature miRNA. The specific interaction with target pri-miRNAs occurs via an 5'-GGAG-3' motif in the pre-miRNA terminal loop. The sequence is that of Protein lin-28 homolog B (lin28b) from Xenopus laevis (African clawed frog).